A 262-amino-acid chain; its full sequence is Flap endonuclease Xni (262 aa).

Asp-105 contacts Mg(2+). The 5'-3' exonuclease domain occupies 164–251 (SQFLDLMALA…NINLKDFRAN (88 aa)). The K(+) site is built by Leu-172, Ala-173, Pro-181, Ile-183, and Ile-186. The interaction with DNA stretch occupies residues 185–190 (GIGPKS).

Belongs to the Xni family. The cofactor is Mg(2+). K(+) is required as a cofactor.

Its function is as follows. Has flap endonuclease activity. During DNA replication, flap endonucleases cleave the 5'-overhanging flap structure that is generated by displacement synthesis when DNA polymerase encounters the 5'-end of a downstream Okazaki fragment. The chain is Flap endonuclease Xni from Shewanella sp. (strain W3-18-1).